The following is a 124-amino-acid chain: Small ribosomal subunit protein uS13 (124 aa).

A disordered region spans residues Pro-99–Lys-124. Residues Lys-113 to Lys-124 are compositionally biased toward basic residues.

This sequence belongs to the universal ribosomal protein uS13 family. Part of the 30S ribosomal subunit. Forms a loose heterodimer with protein S19. Forms two bridges to the 50S subunit in the 70S ribosome.

In terms of biological role, located at the top of the head of the 30S subunit, it contacts several helices of the 16S rRNA. In the 70S ribosome it contacts the 23S rRNA (bridge B1a) and protein L5 of the 50S subunit (bridge B1b), connecting the 2 subunits; these bridges are implicated in subunit movement. Contacts the tRNAs in the A and P-sites. This Lachnospira eligens (strain ATCC 27750 / DSM 3376 / VPI C15-48 / C15-B4) (Eubacterium eligens) protein is Small ribosomal subunit protein uS13.